Consider the following 593-residue polypeptide: NADH-quinone oxidoreductase subunit C/D (593 aa).

The NADH dehydrogenase I subunit C stretch occupies residues 1–184 (MTADNAIFIP…DPYSLTLAKQ (184 aa)). The tract at residues 208–593 (DYMFLNLGPN…IDFVMADVDR (386 aa)) is NADH dehydrogenase I subunit D.

It in the N-terminal section; belongs to the complex I 30 kDa subunit family. This sequence in the C-terminal section; belongs to the complex I 49 kDa subunit family. As to quaternary structure, NDH-1 is composed of 13 different subunits. Subunits NuoB, CD, E, F, and G constitute the peripheral sector of the complex.

It is found in the cell inner membrane. It carries out the reaction a quinone + NADH + 5 H(+)(in) = a quinol + NAD(+) + 4 H(+)(out). Its function is as follows. NDH-1 shuttles electrons from NADH, via FMN and iron-sulfur (Fe-S) centers, to quinones in the respiratory chain. The immediate electron acceptor for the enzyme in this species is believed to be ubiquinone. Couples the redox reaction to proton translocation (for every two electrons transferred, four hydrogen ions are translocated across the cytoplasmic membrane), and thus conserves the redox energy in a proton gradient. In Pseudomonas putida (strain ATCC 47054 / DSM 6125 / CFBP 8728 / NCIMB 11950 / KT2440), this protein is NADH-quinone oxidoreductase subunit C/D.